We begin with the raw amino-acid sequence, 476 residues long: Beta-xylosidase (476 aa).

Glu-188 (proton donor) is an active-site residue. The active-site Nucleophile is the Glu-292. N-linked (GlcNAc...) asparagine glycosylation occurs at Asn-468.

Belongs to the glycosyl hydrolase 5 (cellulase A) family.

The protein resides in the secreted. It catalyses the reaction Hydrolysis of (1-&gt;4)-beta-D-xylans, to remove successive D-xylose residues from the non-reducing termini.. Catalyzes the hydrolysis of xylo-oligomers to xylose units and plays an important role in xylan degradation. Can also perform the transglycosylation of xylose and alcohol. Has no endoglucanase activity. In Phanerodontia chrysosporium (White-rot fungus), this protein is Beta-xylosidase.